The sequence spans 276 residues: Formamidopyrimidine-DNA glycosylase (276 aa).

Proline 2 functions as the Schiff-base intermediate with DNA in the catalytic mechanism. Glutamate 3 (proton donor) is an active-site residue. Catalysis depends on lysine 60, which acts as the Proton donor; for beta-elimination activity. DNA is bound by residues histidine 93 and arginine 112. An FPG-type zinc finger spans residues 240–274; the sequence is NVYGKKGEPCVTCGTILEKTVVGGRGTHYCPICQP. The active-site Proton donor; for delta-elimination activity is the arginine 264.

It belongs to the FPG family. As to quaternary structure, monomer. Zn(2+) serves as cofactor.

The enzyme catalyses Hydrolysis of DNA containing ring-opened 7-methylguanine residues, releasing 2,6-diamino-4-hydroxy-5-(N-methyl)formamidopyrimidine.. The catalysed reaction is 2'-deoxyribonucleotide-(2'-deoxyribose 5'-phosphate)-2'-deoxyribonucleotide-DNA = a 3'-end 2'-deoxyribonucleotide-(2,3-dehydro-2,3-deoxyribose 5'-phosphate)-DNA + a 5'-end 5'-phospho-2'-deoxyribonucleoside-DNA + H(+). Its function is as follows. Involved in base excision repair of DNA damaged by oxidation or by mutagenic agents. Acts as a DNA glycosylase that recognizes and removes damaged bases. Has a preference for oxidized purines, such as 7,8-dihydro-8-oxoguanine (8-oxoG). Has AP (apurinic/apyrimidinic) lyase activity and introduces nicks in the DNA strand. Cleaves the DNA backbone by beta-delta elimination to generate a single-strand break at the site of the removed base with both 3'- and 5'-phosphates. The polypeptide is Formamidopyrimidine-DNA glycosylase (Bacillus cereus (strain ATCC 10987 / NRS 248)).